We begin with the raw amino-acid sequence, 762 residues long: cGMP-dependent protein kinase 2 (762 aa).

The disordered stretch occupies residues 1 to 25; it reads MGNGSVKPKHSKHPDGHSGNLTTDA. The N-myristoyl glycine moiety is linked to residue glycine 2. Residues 23–85 adopt a coiled-coil conformation; the sequence is TDALRNKVTE…CIQLNKLQDV (63 aa). A phosphoserine mark is found at serine 110 and serine 117. Residues 117–138 form a disordered region; it reads SRRGAKAGVSAEPTTRTYDLNK. A cGMP-binding, high affinity; cAMP-binding, moderate affinity region spans residues 168–283; sequence FLKRLDPQQI…DEQYRNFLRS (116 aa). 3',5'-cyclic AMP contacts are provided by residues 232–235 and 242–243; these read GELA and RT. Residues 232 to 235, 242 to 243, lysine 347, 356 to 359, 366 to 367, aspartate 412, and arginine 415 contribute to the 3',5'-cyclic GMP site; these read GELA, RT, GEKA, and RS. Positions 286–416 are cGMP-binding, high affinity; cAMP-binding, low affinity; sequence LLKNLPEDKL…NLNRDDEKRH (131 aa). Residue serine 431 is modified to Phosphoserine. A Protein kinase domain is found at 453 to 711; sequence LEIIATLGVG…INDIKKHRWL (259 aa). ATP-binding positions include 459-467 and lysine 482; that span reads LGVGGFGRV. Aspartate 576 serves as the catalytic Proton acceptor. The residue at position 609 (threonine 609) is a Phosphothreonine. Residues 712–762 form the AGC-kinase C-terminal domain; sequence NGFNWEGLKARSLPSPLQRELKGPIDHSYFDKYPPEKGMPPDELSGWDKDF. Positions 740–762 are disordered; the sequence is YFDKYPPEKGMPPDELSGWDKDF.

The protein belongs to the protein kinase superfamily. AGC Ser/Thr protein kinase family. cGMP subfamily. In terms of assembly, interacts with GRIA1/GLUR1. In terms of processing, myristoylation mediates membrane localization. In terms of tissue distribution, highly concentrated in brain, lung and intestinal mucosa.

It localises to the apical cell membrane. The catalysed reaction is L-seryl-[protein] + ATP = O-phospho-L-seryl-[protein] + ADP + H(+). It carries out the reaction L-threonyl-[protein] + ATP = O-phospho-L-threonyl-[protein] + ADP + H(+). With respect to regulation, binding of cGMP results in enzyme activation. Its function is as follows. Crucial regulator of intestinal secretion and bone growth. Phosphorylates and activates CFTR on the plasma membrane. Plays a key role in intestinal secretion by regulating cGMP-dependent translocation of CFTR in jejunum. Acts downstream of NMDAR to activate the plasma membrane accumulation of GRIA1/GLUR1 in synapse and increase synaptic plasticity. Phosphorylates GRIA1/GLUR1 at Ser-863. Acts as a regulator of gene expression and activator of the extracellular signal-regulated kinases MAPK3/ERK1 and MAPK1/ERK2 in mechanically stimulated osteoblasts. Under fluid shear stress, mediates ERK activation and subsequent induction of FOS, FOSL1/FRA1, FOSL2/FRA2 and FOSB that play a key role in the osteoblast anabolic response to mechanical stimulation. This is cGMP-dependent protein kinase 2 (PRKG2) from Homo sapiens (Human).